The sequence spans 270 residues: Putative pyruvate, phosphate dikinase regulatory protein (270 aa).

147-154 is an ADP binding site; the sequence is GVSRSSKT.

This sequence belongs to the pyruvate, phosphate/water dikinase regulatory protein family. PDRP subfamily.

The catalysed reaction is N(tele)-phospho-L-histidyl/L-threonyl-[pyruvate, phosphate dikinase] + ADP = N(tele)-phospho-L-histidyl/O-phospho-L-threonyl-[pyruvate, phosphate dikinase] + AMP + H(+). The enzyme catalyses N(tele)-phospho-L-histidyl/O-phospho-L-threonyl-[pyruvate, phosphate dikinase] + phosphate + H(+) = N(tele)-phospho-L-histidyl/L-threonyl-[pyruvate, phosphate dikinase] + diphosphate. In terms of biological role, bifunctional serine/threonine kinase and phosphorylase involved in the regulation of the pyruvate, phosphate dikinase (PPDK) by catalyzing its phosphorylation/dephosphorylation. The chain is Putative pyruvate, phosphate dikinase regulatory protein from Citrifermentans bemidjiense (strain ATCC BAA-1014 / DSM 16622 / JCM 12645 / Bem) (Geobacter bemidjiensis).